A 429-amino-acid polypeptide reads, in one-letter code: Argininosuccinate lyase (429 aa).

The protein belongs to the lyase 1 family. Argininosuccinate lyase subfamily.

It is found in the cytoplasm. The enzyme catalyses 2-(N(omega)-L-arginino)succinate = fumarate + L-arginine. Its pathway is amino-acid biosynthesis; L-arginine biosynthesis; L-arginine from L-ornithine and carbamoyl phosphate: step 3/3. This chain is Argininosuccinate lyase, found in Pyrobaculum islandicum (strain DSM 4184 / JCM 9189 / GEO3).